The chain runs to 145 residues: Leptin (145 aa).

The N-terminal stretch at 1-12 (LWLWPYLFFIEA) is a signal peptide.

It belongs to the leptin family.

The protein resides in the secreted. Functionally, key player in the regulation of energy balance and body weight control. Once released into the circulation, has central and peripheral effects by binding LEPR, found in many tissues, which results in the activation of several major signaling pathways. In the hypothalamus, acts as an appetite-regulating factor that induces a decrease in food intake and an increase in energy consumption by inducing anorexinogenic factors and suppressing orexigenic neuropeptides, also regulates bone mass and secretion of hypothalamo-pituitary-adrenal hormones. In the periphery, increases basal metabolism, influences reproductive function, regulates pancreatic beta-cell function and insulin secretion, is pro-angiogenic for endothelial cell and affects innate and adaptive immunity. In the arcuate nucleus of the hypothalamus, activates by depolarization POMC neurons inducing FOS and SOCS3 expression to release anorexigenic peptides and inhibits by hyperpolarization NPY neurons inducing SOCS3 with a consequent reduction on release of orexigenic peptides. In addition to its known satiety inducing effect, has a modulatory role in nutrient absorption. In the intestine, reduces glucose absorption by enterocytes by activating PKC and leading to a sequential activation of p38, PI3K and ERK signaling pathways which exerts an inhibitory effect on glucose absorption. Acts as a growth factor on certain tissues, through the activation of different signaling pathways increases expression of genes involved in cell cycle regulation such as CCND1, via JAK2-STAT3 pathway, or VEGFA, via MAPK1/3 and PI3K-AKT1 pathways. May also play an apoptotic role via JAK2-STAT3 pathway and up-regulation of BIRC5 expression. Pro-angiogenic, has mitogenic activity on vascular endothelial cells and plays a role in matrix remodeling by regulating the expression of matrix metalloproteinases (MMPs) and tissue inhibitors of metalloproteinases (TIMPs). In innate immunity, modulates the activity and function of neutrophils by increasing chemotaxis and the secretion of oxygen radicals. Increases phagocytosis by macrophages and enhances secretion of pro-inflammatory mediators. Increases cytotoxic ability of NK cells. Plays a pro-inflammatory role, in synergy with IL1B, by inducing NOS2 which promotes the production of IL6, IL8 and Prostaglandin E2, through a signaling pathway that involves JAK2, PI3K, MAP2K1/MEK1 and MAPK14/p38. In adaptive immunity, promotes the switch of memory T-cells towards T helper-1 cell immune responses. Increases CD4(+)CD25(-) T-cell proliferation and reduces autophagy during TCR (T-cell receptor) stimulation, through MTOR signaling pathway activation and BCL2 up-regulation. In Equus caballus (Horse), this protein is Leptin (LEP).